A 350-amino-acid chain; its full sequence is Putative deoxyribonuclease-2 (350 aa).

It belongs to the DNase II family.

In Burkholderia thailandensis (strain ATCC 700388 / DSM 13276 / CCUG 48851 / CIP 106301 / E264), this protein is Putative deoxyribonuclease-2.